The following is a 291-amino-acid chain: ATP synthase gamma chain (291 aa).

Belongs to the ATPase gamma chain family. F-type ATPases have 2 components, CF(1) - the catalytic core - and CF(0) - the membrane proton channel. CF(1) has five subunits: alpha(3), beta(3), gamma(1), delta(1), epsilon(1). CF(0) has three main subunits: a, b and c.

The protein localises to the cell inner membrane. Produces ATP from ADP in the presence of a proton gradient across the membrane. The gamma chain is believed to be important in regulating ATPase activity and the flow of protons through the CF(0) complex. In Burkholderia mallei (strain NCTC 10247), this protein is ATP synthase gamma chain.